Reading from the N-terminus, the 252-residue chain is ATP-dependent L-serine kinase (252 aa).

E35 is a catalytic residue. V73 contributes to the O-phospho-L-serine binding site. Mg(2+) is bound at residue D74. O-phospho-L-serine contacts are provided by G75, H76, H77, W107, K231, T233, and H235.

This sequence belongs to the SerK family. Monomer. The cofactor is Mg(2+).

The enzyme catalyses L-serine + ATP = O-phospho-L-serine + ADP + H(+). In terms of biological role, free serine kinase that uses ATP to phosphorylate L-serine to yield O-phospho-L-serine and ADP. Can use ATP, UTP, CTP, GTP and the inorganic polyphosphates triphosphate and tetraphosphate as phosphate donors, with a preference for nucleoside 5'-triphosphates, but cannot use ADP. The catalytic efficiency is highest for ATP. Is specific for L-serine and cannot phosphorylate structurally similar compounds such as D-serine, L-threonine, L-homoserine, hydroxypyruvate, 3-hydroxypropionate and DL-glycerate. Likely contributes to serine metabolism, including cysteine biosynthesis. This chain is ATP-dependent L-serine kinase, found in Staphylothermus marinus (strain ATCC 43588 / DSM 3639 / JCM 9404 / F1).